The chain runs to 166 residues: Small ribosomal subunit protein uS5 (166 aa).

One can recognise an S5 DRBM domain in the interval 12–75 (YIEKLVQVNR…EAARRNMIQV (64 aa)).

The protein belongs to the universal ribosomal protein uS5 family. Part of the 30S ribosomal subunit. Contacts proteins S4 and S8.

In terms of biological role, with S4 and S12 plays an important role in translational accuracy. Functionally, located at the back of the 30S subunit body where it stabilizes the conformation of the head with respect to the body. The sequence is that of Small ribosomal subunit protein uS5 from Pseudomonas fluorescens (strain ATCC BAA-477 / NRRL B-23932 / Pf-5).